Reading from the N-terminus, the 142-residue chain is Small ribosomal subunit protein uS12 (142 aa).

Residues 1 to 44 are disordered; it reads MANGKYAARKLKKDRQKHRWSDTDYARRERGLGKKSDPLEGAPQ. Residues 7-18 are compositionally biased toward basic residues; sequence AARKLKKDRQKH. Over residues 19-38 the composition is skewed to basic and acidic residues; that stretch reads RWSDTDYARRERGLGKKSDP.

This sequence belongs to the universal ribosomal protein uS12 family. As to quaternary structure, part of the 30S ribosomal subunit.

With S4 and S5 plays an important role in translational accuracy. Located at the interface of the 30S and 50S subunits. The polypeptide is Small ribosomal subunit protein uS12 (Haloarcula marismortui (strain ATCC 43049 / DSM 3752 / JCM 8966 / VKM B-1809) (Halobacterium marismortui)).